A 110-amino-acid polypeptide reads, in one-letter code: UPF0060 membrane protein Noc_2955 (110 aa).

4 helical membrane passes run V7–W27, T33–L53, A63–I83, and T87–P107.

Belongs to the UPF0060 family.

The protein localises to the cell inner membrane. The polypeptide is UPF0060 membrane protein Noc_2955 (Nitrosococcus oceani (strain ATCC 19707 / BCRC 17464 / JCM 30415 / NCIMB 11848 / C-107)).